The primary structure comprises 539 residues: Ell-associated factor Eaf (539 aa).

The interval 119–539 (TRSEMTHHKP…SSNSSDDDDD (421 aa)) is disordered. Residues 132–146 (PATNINHNNIPMSTN) are compositionally biased toward polar residues. Pro residues predominate over residues 151 to 163 (GPGPGPGSGPSPP). Residues 174–195 (KLENSTMRISSKTKVSTGSRRN) are compositionally biased toward polar residues. Phosphoserine is present on Ser205. The segment covering 220-238 (RSPQSAPAWNANNAQQTLP) has biased composition (polar residues). Low complexity-rich tracts occupy residues 267-278 (SGSSTGSSTGQP), 309-337 (MHQN…YGRG), and 345-375 (NNYA…SHHS). Over residues 420 to 435 (DSSDSDSGSESDDSTD) the composition is skewed to acidic residues. Composition is skewed to low complexity over residues 461 to 493 (HQQL…QPQQ) and 520 to 533 (NDLL…SSNS).

This sequence belongs to the EAF family.

It is found in the nucleus. Functionally, promotes transcriptional elongation by Su(Tpl)/ELL. Essential for development. The protein is Ell-associated factor Eaf of Drosophila willistoni (Fruit fly).